We begin with the raw amino-acid sequence, 246 residues long: Uridylate kinase (246 aa).

Residue 16-19 participates in ATP binding; it reads KFSG. G58 contacts UMP. ATP-binding residues include G59 and R63. UMP-binding positions include D78 and 139–146; that span reads TGNPFFTT. Residues T166, Y172, and D175 each contribute to the ATP site.

Belongs to the UMP kinase family. As to quaternary structure, homohexamer.

Its subcellular location is the cytoplasm. The enzyme catalyses UMP + ATP = UDP + ADP. It functions in the pathway pyrimidine metabolism; CTP biosynthesis via de novo pathway; UDP from UMP (UMPK route): step 1/1. Its activity is regulated as follows. Inhibited by UTP. Functionally, catalyzes the reversible phosphorylation of UMP to UDP. The chain is Uridylate kinase from Legionella pneumophila (strain Corby).